We begin with the raw amino-acid sequence, 97 residues long: MSDKHVDIDTVKYISKLSKLKFTDNEAKKLAGEFEAILGHFETIDKVDLSDINVNEFDEVNTEFRKDVPKVFEDKKKLMQNVKSLRDGAIEVPKIIE.

Belongs to the GatC family. In terms of assembly, heterotrimer of A, B and C subunits.

The enzyme catalyses L-glutamyl-tRNA(Gln) + L-glutamine + ATP + H2O = L-glutaminyl-tRNA(Gln) + L-glutamate + ADP + phosphate + H(+). It catalyses the reaction L-aspartyl-tRNA(Asn) + L-glutamine + ATP + H2O = L-asparaginyl-tRNA(Asn) + L-glutamate + ADP + phosphate + 2 H(+). In terms of biological role, allows the formation of correctly charged Asn-tRNA(Asn) or Gln-tRNA(Gln) through the transamidation of misacylated Asp-tRNA(Asn) or Glu-tRNA(Gln) in organisms which lack either or both of asparaginyl-tRNA or glutaminyl-tRNA synthetases. The reaction takes place in the presence of glutamine and ATP through an activated phospho-Asp-tRNA(Asn) or phospho-Glu-tRNA(Gln). The protein is Glutamyl-tRNA(Gln) amidotransferase subunit C 2 (gatC2) of Clostridium acetobutylicum (strain ATCC 824 / DSM 792 / JCM 1419 / IAM 19013 / LMG 5710 / NBRC 13948 / NRRL B-527 / VKM B-1787 / 2291 / W).